We begin with the raw amino-acid sequence, 107 residues long: Small leucine-rich protein 1 (107 aa).

2 helical membrane-spanning segments follow: residues A19–S39 and F53–F73. Positions S85–T107 are disordered.

Its subcellular location is the membrane. This Homo sapiens (Human) protein is Small leucine-rich protein 1 (SMLR1).